The primary structure comprises 726 residues: Prolyl endopeptidase-like (726 aa).

Residue serine 138 is modified to Phosphoserine. Residues serine 558, aspartate 644, and histidine 689 each act as charge relay system in the active site.

Belongs to the peptidase S9A family. As to quaternary structure, homodimer. Interacts with the AP-1 complex.

It is found in the cytoplasm. It localises to the cytosol. The protein localises to the golgi apparatus. The protein resides in the trans-Golgi network. Its subcellular location is the cytoskeleton. It is found in the nucleus. Functionally, serine peptidase whose precise substrate specificity remains unclear. Does not cleave peptides after a arginine or lysine residue. Regulates trans-Golgi network morphology and sorting by regulating the membrane binding of the AP-1 complex. May play a role in the regulation of synaptic vesicle exocytosis. In Rattus norvegicus (Rat), this protein is Prolyl endopeptidase-like (Prepl).